The sequence spans 104 residues: Large ribosomal subunit protein uL24 (104 aa).

Belongs to the universal ribosomal protein uL24 family. Part of the 50S ribosomal subunit.

In terms of biological role, one of two assembly initiator proteins, it binds directly to the 5'-end of the 23S rRNA, where it nucleates assembly of the 50S subunit. Its function is as follows. One of the proteins that surrounds the polypeptide exit tunnel on the outside of the subunit. This Hydrogenovibrio crunogenus (strain DSM 25203 / XCL-2) (Thiomicrospira crunogena) protein is Large ribosomal subunit protein uL24.